The primary structure comprises 449 residues: MKSFEVNFDGLVGPTHNYGGLSYGNVASQSNSQQGSNPREAARQGLAKMKALMEMGFKQGVLAPQERPDIAALRRLGFTGSDAEVIQRAAKDAMPLLVASCSASSMWVANAATVSPSADTADGRVHFTAANLNCKYHRSIEHPTTSRVLGAMFSDEKVFAHHEALPAVAQFGDEGAANHTRFCRAYGEAGVEFFVYGRSAFDSRYPAPQKYPARQTLEASQAVARLHGLSDDGVVYAQQNPAVIDQGVFHNDVISVGNGEVLFYHEDAFLETDAVLGQLQAKLASKGGNFKGICVPRAAVTVEDAVRSYLFNSQLLSREDGSMLLVVPEECRNNERVWTYLGQLTSQGGPVKEVKVFDLKQSMQNGGGPACLRLRVALKENELAAVNPGVIMTASLYDTLVQWVDKHYRDRLGEADLADPQLLVECRTALDELTQILKLGSVYPFQRQP.

Residues 19 to 28 (GGLSYGNVAS), asparagine 110, and 137 to 138 (HR) each bind substrate. Positions 23 to 43 (YGNVASQSNSQQGSNPREAAR) are disordered. Residues 25–37 (NVASQSNSQQGSN) show a composition bias toward polar residues. The active site involves glutamate 174. Arginine 214 serves as a coordination point for substrate. Histidine 250 is a catalytic residue. Positions 252 and 365 each coordinate substrate. Catalysis depends on cysteine 371, which acts as the Nucleophile.

It belongs to the succinylarginine dihydrolase family. As to quaternary structure, homodimer.

It carries out the reaction N(2)-succinyl-L-arginine + 2 H2O + 2 H(+) = N(2)-succinyl-L-ornithine + 2 NH4(+) + CO2. It participates in amino-acid degradation; L-arginine degradation via AST pathway; L-glutamate and succinate from L-arginine: step 2/5. Functionally, catalyzes the hydrolysis of N(2)-succinylarginine into N(2)-succinylornithine, ammonia and CO(2). This Pseudomonas entomophila (strain L48) protein is N-succinylarginine dihydrolase.